Here is a 184-residue protein sequence, read N- to C-terminus: uncharacterized protein (184 aa).

The N-terminal stretch at 1-20 (MKKQILALVCGVIFSSSTWA) is a signal peptide.

It to E.coli YtfJ.

Its subcellular location is the periplasm. This is an uncharacterized protein from Haemophilus influenzae (strain ATCC 51907 / DSM 11121 / KW20 / Rd).